The chain runs to 283 residues: Putative S-adenosyl-L-methionine-dependent methyltransferase SCO7813 (283 aa).

S-adenosyl-L-methionine contacts are provided by residues Asp121 and 150-151; that span reads DL. The tract at residues 264 to 283 is disordered; that stretch reads MSTLPQHEDGPGGLISAVRR.

Belongs to the UPF0677 family.

Exhibits S-adenosyl-L-methionine-dependent methyltransferase activity. The sequence is that of Putative S-adenosyl-L-methionine-dependent methyltransferase SCO7813 from Streptomyces coelicolor (strain ATCC BAA-471 / A3(2) / M145).